We begin with the raw amino-acid sequence, 150 residues long: Large ribosomal subunit protein uL13 (150 aa).

This sequence belongs to the universal ribosomal protein uL13 family. In terms of assembly, part of the 50S ribosomal subunit.

Functionally, this protein is one of the early assembly proteins of the 50S ribosomal subunit, although it is not seen to bind rRNA by itself. It is important during the early stages of 50S assembly. This is Large ribosomal subunit protein uL13 from Chlamydia trachomatis serovar A (strain ATCC VR-571B / DSM 19440 / HAR-13).